The following is a 258-amino-acid chain: Thiazole synthase (258 aa).

K100 (schiff-base intermediate with DXP) is an active-site residue. 1-deoxy-D-xylulose 5-phosphate contacts are provided by residues G161, 187–188 (AG), and 209–210 (NT).

This sequence belongs to the ThiG family. As to quaternary structure, homotetramer. Forms heterodimers with either ThiH or ThiS.

It is found in the cytoplasm. The catalysed reaction is [ThiS sulfur-carrier protein]-C-terminal-Gly-aminoethanethioate + 2-iminoacetate + 1-deoxy-D-xylulose 5-phosphate = [ThiS sulfur-carrier protein]-C-terminal Gly-Gly + 2-[(2R,5Z)-2-carboxy-4-methylthiazol-5(2H)-ylidene]ethyl phosphate + 2 H2O + H(+). The protein operates within cofactor biosynthesis; thiamine diphosphate biosynthesis. Functionally, catalyzes the rearrangement of 1-deoxy-D-xylulose 5-phosphate (DXP) to produce the thiazole phosphate moiety of thiamine. Sulfur is provided by the thiocarboxylate moiety of the carrier protein ThiS. In vitro, sulfur can be provided by H(2)S. In Campylobacter jejuni (strain RM1221), this protein is Thiazole synthase.